A 999-amino-acid polypeptide reads, in one-letter code: Multiple C2 and transmembrane domain-containing protein 1 (999 aa).

The segment covering M1–S19 has biased composition (low complexity). Residues M1–K241 form a disordered region. The span at R34–G44 shows a compositional bias: gly residues. Over residues G65–S79 the composition is skewed to low complexity. Polar residues predominate over residues F92 to C101. Low complexity-rich tracts occupy residues P131–G141 and G149–S169. Basic and acidic residues-rich tracts occupy residues R175–R185 and R228–S238. 3 consecutive C2 domains span residues I242–L360, Q452–L569, and Q603–L724. Ca(2+) contacts are provided by D277, D283, D330, D332, D338, D486, D492, D539, D541, D547, D642, D648, D694, D696, and D702. Transmembrane regions (helical) follow at residues F811–L831 and P914–I934.

Belongs to the MCTP family. It depends on Ca(2+) as a cofactor.

Its subcellular location is the cytoplasmic vesicle. It localises to the secretory vesicle. The protein resides in the synaptic vesicle membrane. It is found in the recycling endosome. The protein localises to the endoplasmic reticulum membrane. Functionally, calcium sensor which is essential for the stabilization of normal baseline neurotransmitter release and for the induction and long-term maintenance of presynaptic homeostatic plasticity. This Homo sapiens (Human) protein is Multiple C2 and transmembrane domain-containing protein 1 (MCTP1).